The chain runs to 92 residues: UPF0473 protein BC_4380 (92 aa).

Belongs to the UPF0473 family.

The protein is UPF0473 protein BC_4380 of Bacillus cereus (strain ATCC 14579 / DSM 31 / CCUG 7414 / JCM 2152 / NBRC 15305 / NCIMB 9373 / NCTC 2599 / NRRL B-3711).